Here is a 957-residue protein sequence, read N- to C-terminus: Glycine dehydrogenase (decarboxylating) (957 aa).

At Lys704 the chain carries N6-(pyridoxal phosphate)lysine.

The protein belongs to the GcvP family. As to quaternary structure, the glycine cleavage system is composed of four proteins: P, T, L and H. Requires pyridoxal 5'-phosphate as cofactor.

It carries out the reaction N(6)-[(R)-lipoyl]-L-lysyl-[glycine-cleavage complex H protein] + glycine + H(+) = N(6)-[(R)-S(8)-aminomethyldihydrolipoyl]-L-lysyl-[glycine-cleavage complex H protein] + CO2. Functionally, the glycine cleavage system catalyzes the degradation of glycine. The P protein binds the alpha-amino group of glycine through its pyridoxal phosphate cofactor; CO(2) is released and the remaining methylamine moiety is then transferred to the lipoamide cofactor of the H protein. This chain is Glycine dehydrogenase (decarboxylating), found in Bordetella petrii (strain ATCC BAA-461 / DSM 12804 / CCUG 43448).